The primary structure comprises 344 residues: Acetylpolyamine amidohydrolase 2 (344 aa).

The Proton donor/acceptor role is filled by histidine 159. Zn(2+) is bound by residues aspartate 195, histidine 197, and aspartate 284.

It belongs to the histone deacetylase family. In terms of assembly, homodimer. Zn(2+) serves as cofactor.

The enzyme catalyses N-acetylputrescine + H2O = putrescine + acetate. It catalyses the reaction N-acetylcadaverine + H2O = cadaverine + acetate. The protein operates within amine and polyamine metabolism. In terms of biological role, catalyzes the deacetylation of acetylated polyamines such as N-acetylputrescine and N-acetylcadaverine. Plays an important role in the metabolism of acetylated polyamines in P.aeruginosa. Is involved in the degradation pathways of N-acetylputrescine and N-acetylcadaverine, that allow P.aeruginosa to utilize these acetylpolyamines as a carbon source under glucose starvation. Shows nearly no activity against N(1)-acetylspermine and N(1)-acetylspermidine. Can also hydrolyze artificial trifluoroacetylated lysine-derivative, and to a lesser extent, acetylated lysine-derivative. This chain is Acetylpolyamine amidohydrolase 2, found in Pseudomonas aeruginosa (strain ATCC 15692 / DSM 22644 / CIP 104116 / JCM 14847 / LMG 12228 / 1C / PRS 101 / PAO1).